The chain runs to 166 residues: 2-C-methyl-D-erythritol 2,4-cyclodiphosphate synthase (166 aa).

A divalent metal cation-binding residues include Asp-15 and His-17. Residues 15–17 (DVH) and 43–44 (HS) each bind 4-CDP-2-C-methyl-D-erythritol 2-phosphate. His-51 lines the a divalent metal cation pocket. 4-CDP-2-C-methyl-D-erythritol 2-phosphate is bound by residues 65-67 (DIG), 141-144 (TTNE), and Arg-151.

Belongs to the IspF family. As to quaternary structure, homotrimer. A divalent metal cation is required as a cofactor.

It carries out the reaction 4-CDP-2-C-methyl-D-erythritol 2-phosphate = 2-C-methyl-D-erythritol 2,4-cyclic diphosphate + CMP. It participates in isoprenoid biosynthesis; isopentenyl diphosphate biosynthesis via DXP pathway; isopentenyl diphosphate from 1-deoxy-D-xylulose 5-phosphate: step 4/6. Involved in the biosynthesis of isopentenyl diphosphate (IPP) and dimethylallyl diphosphate (DMAPP), two major building blocks of isoprenoid compounds. Catalyzes the conversion of 4-diphosphocytidyl-2-C-methyl-D-erythritol 2-phosphate (CDP-ME2P) to 2-C-methyl-D-erythritol 2,4-cyclodiphosphate (ME-CPP) with a corresponding release of cytidine 5-monophosphate (CMP). This chain is 2-C-methyl-D-erythritol 2,4-cyclodiphosphate synthase, found in Synechococcus sp. (strain CC9311).